The chain runs to 863 residues: MNAGEFLAQTLSPDANVRLNAEKQLENAARTDFAQYMVLLAQELANDNSMPYIRMAAGLALKNAITAREEARKLEYQQLWQSLPVEIKQQVKSLALQTLGSSEHQAGQSAAQLVAAIAAYELATNQWPDLMVTLVANVGEGQPSALKQHSLQTIGYICESVSPEVLSAQSNAILTAVVAGARKEEPDAAVRLAALGALYDSLEFVRENFNNEYERNYIMQVVCEATQSPEASIQTAAFGCLVKIMHLYYDTMPFYMEKALFALTTQGMYNTNEQVALQAVEFWSTVCEEEIEVNLEIQEAQDLNEVPARQNHGFARAAAADILPVLLKLLCNQDEDADEDDWNISMAAATCLQLFAQVVGDLIVNPVLAFVEQNIQNPDWHQREAAVMAFGSVLEGPNVAMLTPLVNQALPVLINMMVDPVIFVKDTTAWALGQISSFVADAINPEIHLSPMVSALLQGLTDNPRIVANCCWAFMNLVCHFAPVDNHQTSVMTPFYEAIIGSLLHVTDQKGNENNSRTSGYETLGTLITFSSDSVLPMIANVLSIILTRLETSIQMQSQILDVEDRANHDELQSNLCNVLTSIIRRFGPDIRTSSDQIMNLLLQTMQTAPKQSVVHEDVLLAIGAMMNSLEEQFEVYVPSFVPFLSSALSNEQEYQLCSVAVGLVGDLARALNAKILPYCDDFMTRLVQDLQSSVLDRNVKPAILSCFSDIALAIGAAFQTYLEAVMVLLQQASSVQAPPGANFSMIDYVDALRLGIVEAYVGITQAVRTDNRLDLIQPYVHSMFTLLNMITADPECSESLTRAALGLLGDLAESFPKGELKSYFAADWVAALLNSGKTKISSQQTKDLARWATEQVKRQARA.

19 HEAT repeats span residues 2 to 31 (NAGE…AART), 33 to 62 (FAQY…LALK), 85 to 124 (VEIK…ELAT), 129 to 159 (DLMV…YICE), 170 to 201 (SNAI…LYDS), 212 to 248 (EYER…MHLY), 253 to 299 (PFYM…EIQE), 314 to 360 (FARA…QVVG), 364 to 392 (VNPV…AFGS), 399 to 439 (VAML…SSFV), 449 to 481 (LSPM…VCHF), 496 to 530 (YEAI…LITF), 536 to 586 (LPMI…IIRR), 592 to 630 (RTSS…MNSL), 635 to 671 (EVYV…LARA), 677 to 715 (LPYC…ALAI), 720 to 767 (QTYL…ITQA), 778 to 815 (QPYV…LAES), and 822 to 861 (KSYF…KRQA). The region spanning 21–101 (AEKQLENAAR…KSLALQTLGS (81 aa)) is the Importin N-terminal domain.

Belongs to the importin beta family. Importin beta-1 subfamily. Forms a complex with an importin alpha subunit. Interacts with Ran; interacts specifically with the GTP-bound form of Ran (GTP-Ran), protecting it from GTP hydrolysis and nucleotide exchange. Interacts with nucleoporins.

Its subcellular location is the cytoplasm. It is found in the nucleus envelope. It localises to the nucleus. The protein resides in the nuclear pore complex. Its function is as follows. Importin beta subunit that functions in nuclear protein import through association with the importin alpha subunit, which binds to the clasical nuclear localization signal (cNLS) in cargo substrates. Docking of the importin/substrate complex to the nuclear pore complex (NPC) is mediated by importin beta through binding to nucleoporin FxFG repeats and the complex is subsequently translocated through the pore by an energy requiring, Ran-dependent mechanism. At the nucleoplasmic side of the NPC, GTP-Ran binds to importin beta and the three components separate, leading to release of the cargo. Importin alpha and beta are re-exported from the nucleus to the cytoplasm where GTP hydrolysis releases Ran from importin beta. The directionality of nuclear import is thought to be conferred by an asymmetric distribution of the GTP- and GDP-bound forms of Ran between the cytoplasm and nucleus. The chain is Importin subunit beta-1 from Schizosaccharomyces pombe (strain 972 / ATCC 24843) (Fission yeast).